Consider the following 155-residue polypeptide: Endoribonuclease YbeY (155 aa).

3 residues coordinate Zn(2+): H114, H118, and H124.

Belongs to the endoribonuclease YbeY family. It depends on Zn(2+) as a cofactor.

It is found in the cytoplasm. Single strand-specific metallo-endoribonuclease involved in late-stage 70S ribosome quality control and in maturation of the 3' terminus of the 16S rRNA. The protein is Endoribonuclease YbeY of Photorhabdus laumondii subsp. laumondii (strain DSM 15139 / CIP 105565 / TT01) (Photorhabdus luminescens subsp. laumondii).